We begin with the raw amino-acid sequence, 327 residues long: Aspartate--ammonia ligase (327 aa).

It belongs to the class-II aminoacyl-tRNA synthetase family. AsnA subfamily.

It is found in the cytoplasm. The enzyme catalyses L-aspartate + NH4(+) + ATP = L-asparagine + AMP + diphosphate + H(+). The protein operates within amino-acid biosynthesis; L-asparagine biosynthesis; L-asparagine from L-aspartate (ammonia route): step 1/1. In Fusobacterium nucleatum subsp. nucleatum (strain ATCC 25586 / DSM 15643 / BCRC 10681 / CIP 101130 / JCM 8532 / KCTC 2640 / LMG 13131 / VPI 4355), this protein is Aspartate--ammonia ligase.